Consider the following 218-residue polypeptide: Histone H1.1 (218 aa).

The interval 1–42 (MSEVALPAPAASTSPEKPSAGKKAKKPAKAAAAAKKKPAGPS) is disordered. Position 2 is an N-acetylserine (S2). A phosphoserine mark is found at S2 and S12. K17 carries the post-translational modification N6-acetyllysine. The span at 20 to 38 (AGKKAKKPAKAAAAAKKKP) shows a compositional bias: basic residues. The residue at position 37 (K37) is an N6-(beta-hydroxybutyryl)lysine. The region spanning 39–112 (AGPSVSELIV…GASGSFKLNK (74 aa)) is the H15 domain. Position 44 is a phosphoserine (S44). K55 carries the post-translational modification N6-(beta-hydroxybutyryl)lysine. R57 is modified (citrulline). The residue at position 67 (K67) is an N6-(beta-hydroxybutyryl)lysine. K78 bears the N6-acetyllysine mark. Residue K88 is modified to N6-(beta-hydroxybutyryl)lysine. An N6-(beta-hydroxybutyryl)lysine; alternate modification is found at K93. An N6-acetyllysine; alternate modification is found at K93. A Phosphoserine; by PKC modification is found at S107. The residue at position 109 (K109) is an N6-(beta-hydroxybutyryl)lysine. The tract at residues 116 to 218 (SVDAKPTATK…KPKKAAPKKK (103 aa)) is disordered. The segment covering 119–149 (AKPTATKVATKTKVTSASKKPKKASGAAAAK) has biased composition (low complexity). K125 bears the N6-acetyllysine mark. 2 stretches are compositionally biased toward basic residues: residues 150 to 183 (KSVK…KKVA) and 190 to 218 (KAVK…PKKK). A Phosphothreonine modification is found at T206.

Belongs to the histone H1/H5 family. In terms of assembly, interacts with DFFB. H1 histones are progressively phosphorylated during the cell cycle, becoming maximally phosphorylated during late G2 phase and M phase, and being dephosphorylated sharply thereafter. In terms of processing, citrullination at Arg-57 (H1R54ci) by PADI4 takes place within the DNA-binding site of H1 and results in its displacement from chromatin and global chromatin decondensation, thereby promoting pluripotency and stem cell maintenance.

It localises to the nucleus. Its subcellular location is the chromosome. H1 histones bind to linker DNA between nucleosomes forming the macromolecular structure known as the chromatin fiber. H1 histones are necessary for the condensation of nucleosome chains into higher-order structured fibers. Also acts as a regulator of individual gene transcription through chromatin remodeling. The polypeptide is Histone H1.1 (Bos taurus (Bovine)).